The chain runs to 353 residues: Peptide methionine sulfoxide reductase MsrA/MsrB (353 aa).

The segment at 43 to 196 (REIYLAGGCF…PNGYCHIDIT (154 aa)) is peptide methionine sulfoxide reductase A. Cys51 is an active-site residue. The MsrB domain maps to 213-336 (DAELKAKLTP…NSASIKFIPL (124 aa)). Catalysis depends on Cys325, which acts as the Nucleophile.

The protein in the N-terminal section; belongs to the MsrA Met sulfoxide reductase family. In the C-terminal section; belongs to the MsrB Met sulfoxide reductase family.

It catalyses the reaction L-methionyl-[protein] + [thioredoxin]-disulfide + H2O = L-methionyl-(S)-S-oxide-[protein] + [thioredoxin]-dithiol. The enzyme catalyses [thioredoxin]-disulfide + L-methionine + H2O = L-methionine (S)-S-oxide + [thioredoxin]-dithiol. It carries out the reaction L-methionyl-[protein] + [thioredoxin]-disulfide + H2O = L-methionyl-(R)-S-oxide-[protein] + [thioredoxin]-dithiol. Its function is as follows. Has an important function as a repair enzyme for proteins that have been inactivated by oxidation. Catalyzes the reversible oxidation-reduction of methionine sulfoxide in proteins to methionine. The polypeptide is Peptide methionine sulfoxide reductase MsrA/MsrB (msrAB) (Haemophilus influenzae (strain ATCC 51907 / DSM 11121 / KW20 / Rd)).